Consider the following 310-residue polypeptide: 4-hydroxyproline 2-epimerase (310 aa).

The active-site Proton acceptor is Cys88. Substrate is bound by residues 89–90, His208, and Asp232; that span reads GH. Residue Cys236 is the Proton donor of the active site. 237-238 serves as a coordination point for substrate; the sequence is GT.

The protein belongs to the proline racemase family.

The catalysed reaction is trans-4-hydroxy-L-proline = cis-4-hydroxy-D-proline. Functionally, catalyzes the epimerization of trans-4-hydroxy-L-proline (t4LHyp) to cis-4-hydroxy-D-proline (c4DHyp). Is likely involved in a degradation pathway that converts t4LHyp to alpha-ketoglutarate. Displays no proline racemase activity. In Burkholderia cenocepacia (strain ATCC BAA-245 / DSM 16553 / LMG 16656 / NCTC 13227 / J2315 / CF5610) (Burkholderia cepacia (strain J2315)), this protein is 4-hydroxyproline 2-epimerase.